The following is a 101-amino-acid chain: MMLEHVLVLSAYLFSFVLYGLITSRNMVRALMCLELILNAVNLNFVTFSDFFDSRQLKGAIFSIFVIAIAAAEAAIGLAIVSSIYRNRKSTRINQSNLLNK.

3 consecutive transmembrane segments (helical) span residues 2–22, 32–52, and 61–81; these read MLEH…YGLI, MCLE…SDFF, and IFSI…LAIV.

The protein belongs to the complex I subunit 4L family. As to quaternary structure, NDH is composed of at least 16 different subunits, 5 of which are encoded in the nucleus.

Its subcellular location is the plastid. The protein localises to the chloroplast thylakoid membrane. The enzyme catalyses a plastoquinone + NADH + (n+1) H(+)(in) = a plastoquinol + NAD(+) + n H(+)(out). It carries out the reaction a plastoquinone + NADPH + (n+1) H(+)(in) = a plastoquinol + NADP(+) + n H(+)(out). Functionally, NDH shuttles electrons from NAD(P)H:plastoquinone, via FMN and iron-sulfur (Fe-S) centers, to quinones in the photosynthetic chain and possibly in a chloroplast respiratory chain. The immediate electron acceptor for the enzyme in this species is believed to be plastoquinone. Couples the redox reaction to proton translocation, and thus conserves the redox energy in a proton gradient. The protein is NAD(P)H-quinone oxidoreductase subunit 4L, chloroplastic of Guizotia abyssinica (Niger).